A 552-amino-acid polypeptide reads, in one-letter code: Chaperonin GroEL (552 aa).

ATP-binding positions include 30 to 33 (TLGP), lysine 51, 87 to 91 (DGTTT), glycine 415, 479 to 481 (NAA), and aspartate 495.

Belongs to the chaperonin (HSP60) family. Forms a cylinder of 14 subunits composed of two heptameric rings stacked back-to-back. Interacts with the co-chaperonin GroES.

The protein localises to the cytoplasm. The enzyme catalyses ATP + H2O + a folded polypeptide = ADP + phosphate + an unfolded polypeptide.. Its function is as follows. Together with its co-chaperonin GroES, plays an essential role in assisting protein folding. The GroEL-GroES system forms a nano-cage that allows encapsulation of the non-native substrate proteins and provides a physical environment optimized to promote and accelerate protein folding. In Nitrosospira multiformis (strain ATCC 25196 / NCIMB 11849 / C 71), this protein is Chaperonin GroEL.